Reading from the N-terminus, the 139-residue chain is D-ribose pyranase (139 aa).

The active-site Proton donor is histidine 20. Substrate is bound by residues aspartate 28, histidine 106, and 128-130; that span reads YAN.

It belongs to the RbsD / FucU family. RbsD subfamily. Homodecamer.

The protein localises to the cytoplasm. It carries out the reaction beta-D-ribopyranose = beta-D-ribofuranose. It functions in the pathway carbohydrate metabolism; D-ribose degradation; D-ribose 5-phosphate from beta-D-ribopyranose: step 1/2. Its function is as follows. Catalyzes the interconversion of beta-pyran and beta-furan forms of D-ribose. This chain is D-ribose pyranase, found in Escherichia coli (strain 55989 / EAEC).